A 120-amino-acid chain; its full sequence is Large ribosomal subunit protein eL8 (120 aa).

Belongs to the eukaryotic ribosomal protein eL8 family. As to quaternary structure, part of the 50S ribosomal subunit. Probably part of the RNase P complex.

The protein resides in the cytoplasm. Functionally, multifunctional RNA-binding protein that recognizes the K-turn motif in ribosomal RNA, the RNA component of RNase P, box H/ACA, box C/D and box C'/D' sRNAs. The chain is Large ribosomal subunit protein eL8 from Methanosarcina mazei (strain ATCC BAA-159 / DSM 3647 / Goe1 / Go1 / JCM 11833 / OCM 88) (Methanosarcina frisia).